The primary structure comprises 268 residues: Hydroxyethylthiazole kinase (268 aa).

Met46 provides a ligand contact to substrate. Positions 122 and 168 each coordinate ATP. Residue Gly195 participates in substrate binding.

It belongs to the Thz kinase family. Mg(2+) is required as a cofactor.

The catalysed reaction is 5-(2-hydroxyethyl)-4-methylthiazole + ATP = 4-methyl-5-(2-phosphooxyethyl)-thiazole + ADP + H(+). The protein operates within cofactor biosynthesis; thiamine diphosphate biosynthesis; 4-methyl-5-(2-phosphoethyl)-thiazole from 5-(2-hydroxyethyl)-4-methylthiazole: step 1/1. Functionally, catalyzes the phosphorylation of the hydroxyl group of 4-methyl-5-beta-hydroxyethylthiazole (THZ). The protein is Hydroxyethylthiazole kinase of Desulfatibacillum aliphaticivorans.